We begin with the raw amino-acid sequence, 1151 residues long: Phospholipid-transporting ATPase NEO1 (1151 aa).

2 disordered regions span residues 1 to 21 (MPNP…NNNQ) and 73 to 95 (LDNF…THPL). At 1–184 (MPNPPSFKSH…LSNAKYNAVT (184 aa)) the chain is on the extracellular side. The span at 12-21 (QNLFNSNNNQ) shows a compositional bias: polar residues. Residues 51–104 (EPLSKHNTVGDRESFEMRTVDDLDNFSNHSSDSHRKSSNTDTHPLMYDNRLSQD) form a required for endosome-to-Golgi sorting region. A Phosphoserine modification is found at S102. The chain crosses the membrane as a helical span at residues 185–205 (FVPTLLYEQFKFFYNLYFLVV). Over 206–209 (ALSQ) the chain is Cytoplasmic. A helical membrane pass occupies residues 210 to 230 (AVPALRIGYLSSYIVPLAFVL). Topologically, residues 231–367 (TVTMAKEAID…TSNPLSVDNT (137 aa)) are extracellular. Residues 368–388 (LWANTVLASSGFCIACVVYTG) traverse the membrane as a helical segment. At 389-416 (RDTRQAMNTTTAKVKTGLLELEINSISK) the chain is on the cytoplasmic side. Residues 417 to 437 (ILCACVFALSILLVAFAGFHN) traverse the membrane as a helical segment. D438 is a topological domain (extracellular). The helical transmembrane segment at 439–459 (DWYIDILRYLILFSTIIPVSL) threads the bilayer. The Cytoplasmic portion of the chain corresponds to 460-947 (RVNLDLAKSV…KLAQFVMHRG (488 aa)). The 4-aspartylphosphate intermediate role is filled by D503. D503, K504, and T505 together coordinate ATP. Residue D503 coordinates Mg(2+). T505 contacts Mg(2+). S551 is modified (phosphoserine). 12 residues coordinate ATP: E597, F640, S642, K645, K664, R693, T694, T774, G775, D776, R856, and K862. D882 is a Mg(2+) binding site. ATP is bound by residues N885 and D886. D886 provides a ligand contact to Mg(2+). A helical membrane pass occupies residues 948–968 (LIIAICQAVYSICSLFEPIAL). Residues 969–970 (YQ) are Extracellular-facing. The chain crosses the membrane as a helical span at residues 971–991 (GWLMVGYATCYTMAPVFSLTL). Residues 992–1020 (DHDIEESLTKIYPELYKELTEGKSLSYKT) lie on the Cytoplasmic side of the membrane. Residues 1021 to 1041 (FFVWVLLSLFQGSVIQLFSQA) traverse the membrane as a helical segment. The Extracellular segment spans residues 1042-1052 (FTSLLDTDFTR). Residues 1053–1073 (MVAISFTALVVNELIMVALEI) form a helical membrane-spanning segment. Residues 1074 to 1078 (YTWNK) are Cytoplasmic-facing. A helical transmembrane segment spans residues 1079–1099 (TMLVTEIATLLFYIVSVPFLG). At 1100 to 1109 (DYFDLGYMTT) the chain is on the extracellular side. Residues 1110–1130 (VNYYAGLLVILLISIFPVWTA) traverse the membrane as a helical segment. The Cytoplasmic segment spans residues 1131 to 1151 (KAIYRRLHPPSYAKVQEFATP). Residues 1131-1151 (KAIYRRLHPPSYAKVQEFATP) are required for endosomal targeting.

The protein belongs to the cation transport ATPase (P-type) (TC 3.A.3) family. Type IV subfamily. As to quaternary structure, interacts with MON2. Interacts with ANY1. Functions without a CDC50/LEM3 family accessory subunit. It depends on Mg(2+) as a cofactor.

Its subcellular location is the endosome membrane. It is found in the golgi apparatus membrane. The enzyme catalyses ATP + H2O + phospholipidSide 1 = ADP + phosphate + phospholipidSide 2.. The catalysed reaction is a 1,2-diacyl-sn-glycero-3-phospho-L-serine(out) + ATP + H2O = a 1,2-diacyl-sn-glycero-3-phospho-L-serine(in) + ADP + phosphate + H(+). It carries out the reaction a 1,2-diacyl-sn-glycero-3-phosphoethanolamine(out) + ATP + H2O = a 1,2-diacyl-sn-glycero-3-phosphoethanolamine(in) + ADP + phosphate + H(+). Functionally, flippase that catalyzes the hydrolysis of ATP coupled to the transport of lysophosphatidylserine, phosphatidylethanolamine, and phosphatidylserine from the lumenal to the cytosolic leaflet of the Golgi apparatus membrane and ensures the maintenance of asymmetric distribution of phospholipids. Does not appear to transport phosphatidylcholine or sphingomyelin. May be involved in recycling from endosomes by driving the formation of SNX3-dependent recycling tubules. Required for COPI retrograde transport from the Golgi to the endoplasmic reticulum, Golgi-endosome trafficking, and Golgi-dependent protein glycosylation. This Saccharomyces cerevisiae (strain ATCC 204508 / S288c) (Baker's yeast) protein is Phospholipid-transporting ATPase NEO1.